A 227-amino-acid chain; its full sequence is 7-cyano-7-deazaguanine synthase (227 aa).

8–18 lines the ATP pocket; that stretch reads FSGGQDSTTCL. Residues C187, C196, C199, and C202 each coordinate Zn(2+).

It belongs to the QueC family. Requires Zn(2+) as cofactor.

The enzyme catalyses 7-carboxy-7-deazaguanine + NH4(+) + ATP = 7-cyano-7-deazaguanine + ADP + phosphate + H2O + H(+). It participates in purine metabolism; 7-cyano-7-deazaguanine biosynthesis. Catalyzes the ATP-dependent conversion of 7-carboxy-7-deazaguanine (CDG) to 7-cyano-7-deazaguanine (preQ(0)). This Aliivibrio fischeri (strain ATCC 700601 / ES114) (Vibrio fischeri) protein is 7-cyano-7-deazaguanine synthase.